We begin with the raw amino-acid sequence, 115 residues long: Large ribosomal subunit protein bL19 (115 aa).

Belongs to the bacterial ribosomal protein bL19 family.

In terms of biological role, this protein is located at the 30S-50S ribosomal subunit interface and may play a role in the structure and function of the aminoacyl-tRNA binding site. This is Large ribosomal subunit protein bL19 from Tolumonas auensis (strain DSM 9187 / NBRC 110442 / TA 4).